The following is a 280-amino-acid chain: Purine nucleoside phosphorylase (280 aa).

Phosphate is bound by residues Ser15 and 55–56 (RH). Met194 serves as a coordination point for substrate. A phosphate-binding site is contributed by Thr195. Residue 218-220 (DLD) participates in substrate binding.

It belongs to the PNP/MTAP phosphorylase family. MTAP subfamily. As to quaternary structure, homohexamer. Dimer of a homotrimer.

The catalysed reaction is a purine D-ribonucleoside + phosphate = a purine nucleobase + alpha-D-ribose 1-phosphate. It functions in the pathway purine metabolism; purine nucleoside salvage. In terms of biological role, purine nucleoside phosphorylase involved in purine salvage. This chain is Purine nucleoside phosphorylase, found in Streptomyces coelicolor (strain ATCC BAA-471 / A3(2) / M145).